A 166-amino-acid polypeptide reads, in one-letter code: Thiol peroxidase (166 aa).

Residues 18–164 form the Thioredoxin domain; that stretch reads VKVGDKAPNF…YEKAIEAAKA (147 aa). C60 functions as the Cysteine sulfenic acid (-SOH) intermediate in the catalytic mechanism. C60 and C94 are oxidised to a cystine.

This sequence belongs to the peroxiredoxin family. Tpx subfamily. Homodimer.

The catalysed reaction is a hydroperoxide + [thioredoxin]-dithiol = an alcohol + [thioredoxin]-disulfide + H2O. Functionally, thiol-specific peroxidase that catalyzes the reduction of hydrogen peroxide and organic hydroperoxides to water and alcohols, respectively. Plays a role in cell protection against oxidative stress by detoxifying peroxides. In Halalkalibacterium halodurans (strain ATCC BAA-125 / DSM 18197 / FERM 7344 / JCM 9153 / C-125) (Bacillus halodurans), this protein is Thiol peroxidase.